The primary structure comprises 322 residues: Lipoyl synthase (322 aa).

Cys-69, Cys-74, Cys-80, Cys-95, Cys-99, Cys-102, and Ser-309 together coordinate [4Fe-4S] cluster. A Radical SAM core domain is found at Phe-81–Asp-298.

This sequence belongs to the radical SAM superfamily. Lipoyl synthase family. [4Fe-4S] cluster is required as a cofactor.

Its subcellular location is the cytoplasm. The catalysed reaction is [[Fe-S] cluster scaffold protein carrying a second [4Fe-4S](2+) cluster] + N(6)-octanoyl-L-lysyl-[protein] + 2 oxidized [2Fe-2S]-[ferredoxin] + 2 S-adenosyl-L-methionine + 4 H(+) = [[Fe-S] cluster scaffold protein] + N(6)-[(R)-dihydrolipoyl]-L-lysyl-[protein] + 4 Fe(3+) + 2 hydrogen sulfide + 2 5'-deoxyadenosine + 2 L-methionine + 2 reduced [2Fe-2S]-[ferredoxin]. It participates in protein modification; protein lipoylation via endogenous pathway; protein N(6)-(lipoyl)lysine from octanoyl-[acyl-carrier-protein]: step 2/2. Its function is as follows. Catalyzes the radical-mediated insertion of two sulfur atoms into the C-6 and C-8 positions of the octanoyl moiety bound to the lipoyl domains of lipoate-dependent enzymes, thereby converting the octanoylated domains into lipoylated derivatives. This is Lipoyl synthase from Psychromonas ingrahamii (strain DSM 17664 / CCUG 51855 / 37).